The chain runs to 94 residues: Protein S100-A1 (94 aa).

2 consecutive EF-hand domains span residues 13–48 (INVF…FLDA) and 50–85 (KDVD…LTVA). Residues K28, E33, D63, N65, D67, E69, and E74 each contribute to the Ca(2+) site. S-nitrosocysteine is present on C86.

Belongs to the S-100 family. As to quaternary structure, dimer of either two alpha chains, or two beta chains, or one alpha and one beta chain. Also forms heterodimers with S100P. Interacts with AGER. Interacts with CAPZA1. Interacts with FKBP4. Interacts with RYR1 and RYR2. Interacts with CACYBP in a calcium-dependent manner. Interacts with PPP5C (via TPR repeats); the interaction is calcium-dependent and modulates PPP5C activity. Interacts with ATP2A2 and PLN in a Ca(2+)-dependent manner. Interacts with mitochondrial F1-ATPase subunits ATP5F1A and ATP5F1B; these interactions increase F1-ATPase activity. Glutathionylated; glutathionylation increases affinity to calcium about 10-fold. As to expression, highly prevalent in heart. Also found in lesser quantities in skeletal muscle and brain.

It is found in the cytoplasm. The protein localises to the sarcoplasmic reticulum. The protein resides in the mitochondrion. Small calcium binding protein that plays important roles in several biological processes such as Ca(2+) homeostasis, chondrocyte biology and cardiomyocyte regulation. In response to an increase in intracellular Ca(2+) levels, binds calcium which triggers conformational changes. These changes allow interactions with specific target proteins and modulate their activity. Regulates a network in cardiomyocytes controlling sarcoplasmic reticulum Ca(2+) cycling and mitochondrial function through interaction with the ryanodine receptors RYR1 and RYR2, sarcoplasmic reticulum Ca(2+)-ATPase/ATP2A2 and mitochondrial F1-ATPase. Facilitates diastolic Ca(2+) dissociation and myofilament mechanics in order to improve relaxation during diastole. This is Protein S100-A1 (S100A1) from Homo sapiens (Human).